Here is a 154-residue protein sequence, read N- to C-terminus: Myoglobin (154 aa).

A Globin domain is found at 2–148 (GLSDGEWQLV…FRNEMAAQYK (147 aa)). S4 is subject to Phosphoserine. Residue H65 participates in nitrite binding. H65 contacts O2. Position 68 is a phosphothreonine (T68). H94 is a heme b binding site.

As to quaternary structure, monomeric.

The protein localises to the cytoplasm. It is found in the sarcoplasm. It catalyses the reaction Fe(III)-heme b-[protein] + nitric oxide + H2O = Fe(II)-heme b-[protein] + nitrite + 2 H(+). The catalysed reaction is H2O2 + AH2 = A + 2 H2O. Functionally, monomeric heme protein which primary function is to store oxygen and facilitate its diffusion within muscle tissues. Reversibly binds oxygen through a pentacoordinated heme iron and enables its timely and efficient release as needed during periods of heightened demand. Depending on the oxidative conditions of tissues and cells, and in addition to its ability to bind oxygen, it also has a nitrite reductase activity whereby it regulates the production of bioactive nitric oxide. Under stress conditions, like hypoxia and anoxia, it also protects cells against reactive oxygen species thanks to its pseudoperoxidase activity. This chain is Myoglobin, found in Bubalus bubalis (Domestic water buffalo).